The sequence spans 711 residues: F-box only protein 34 (711 aa).

Disordered regions lie at residues 1 to 36 (MHLKPYWKLQKKEHPPEVSRETQRTPMNHQKAVNDE), 249 to 271 (SESYSAPGACEEPTERGNLEVGE), 337 to 372 (DTQVNPVGSVSVDCGPSRADRCSPKEDQAWDGASQD), and 494 to 529 (YSQLNESTTKESSEASQLEDAAGGDSASEEKSGSAE). Residues 10–23 (QKKEHPPEVSRETQ) are compositionally biased toward basic and acidic residues. The segment covering 354–364 (RADRCSPKEDQ) has biased composition (basic and acidic residues). One can recognise an F-box domain in the interval 572–624 (QQYMAFLPHHIMVKIFRLLPTKSLVALKCTCCYFKFIIEYYNIRPADSRWVRD).

Directly interacts with SKP1 and CUL1.

Its function is as follows. Substrate-recognition component of the SCF (SKP1-CUL1-F-box protein)-type E3 ubiquitin ligase complex. The protein is F-box only protein 34 (FBXO34) of Homo sapiens (Human).